The chain runs to 405 residues: MADTEQPPTAPTAPEPTTATPTAPIAPVAIFKKRGAKGKANLRKRPASPPPAAKDSDDDSSDFESSEDEATGQRIKRRKKNHHSAAVMASSRDHNASTNSGVTKEEQIRSNTIYEADRDAALRLDATKQDATKGSNWFDEDNEKEDLSVGNLLGRTRTMMKTKKKVGGEDDAVQNSEREPDGTYRGLANQASYIQKNPNAPNRKVGPIKAPSNIRTITITDMAPDVCKDYKQTGFCGFGDNCKFLHAREDYAHGWQLDKEWENVTKGKKNLQGTVVASADRRNKPKNTAEEEEDADAAEEALLENIPFACIICRGPYSNSPVVTRCGHYFCEACALKRYRKDPSCAACGSGTNGVFNAAKRLAKLLEKKKARAERLRREARERGEEVSEEEDEGEDEGEGAEGSD.

Disordered stretches follow at residues 1–114 and 162–184; these read MADT…NTIY and TKKK…DGTY. The span at 15-29 shows a compositional bias: low complexity; the sequence is EPTTATPTAPIAPVA. The span at 31–46 shows a compositional bias: basic residues; the sequence is FKKRGAKGKANLRKRP. A compositionally biased stretch (acidic residues) spans 56-70; sequence SDDDSSDFESSEDEA. The span at 74–83 shows a compositional bias: basic residues; the sequence is RIKRRKKNHH. The C3H1-type zinc finger occupies 221–249; sequence DMAPDVCKDYKQTGFCGFGDNCKFLHARE. The segment at 310 to 349 adopts an RING-type zinc-finger fold; that stretch reads CIICRGPYSNSPVVTRCGHYFCEACALKRYRKDPSCAACG. Positions 370–386 are enriched in basic and acidic residues; the sequence is KARAERLRREARERGEE. The interval 370 to 405 is disordered; the sequence is KARAERLRREARERGEEVSEEEDEGEDEGEGAEGSD. Residues 387–405 show a composition bias toward acidic residues; it reads VSEEEDEGEDEGEGAEGSD.

Belongs to the CWC24 family. Associated with the spliceosome.

The protein localises to the nucleus. Its function is as follows. Involved in pre-mRNA splicing. In Neurospora crassa (strain ATCC 24698 / 74-OR23-1A / CBS 708.71 / DSM 1257 / FGSC 987), this protein is Pre-mRNA-splicing factor cwc-24 (cwc-24).